A 1115-amino-acid polypeptide reads, in one-letter code: Carbamoyl phosphate synthase large chain (1115 aa).

The carboxyphosphate synthetic domain stretch occupies residues 1–407 (MPRRTDLHHV…ALGKVMRSLE (407 aa)). The ATP site is built by Arg134, Arg174, Gly180, Gly181, Glu213, Ile215, Glu220, Gly246, Val247, His248, Gln290, and Glu304. Positions 138-333 (KDIVAKAGGE…IAKIAAKLAI (196 aa)) constitute an ATP-grasp 1 domain. Mg(2+) contacts are provided by Gln290, Glu304, and Asn306. Mn(2+) is bound by residues Gln290, Glu304, and Asn306. The segment at 408 to 559 (TTRAGFWTAP…ELDPAAETEV (152 aa)) is oligomerization domain. The interval 560–965 (APQTERPKVL…AFAKSQTAAY (406 aa)) is carbamoyl phosphate synthetic domain. The ATP-grasp 2 domain occupies 693–884 (GDLLSAAGLP…LAKACARIML (192 aa)). ATP contacts are provided by Arg729, Arg768, Leu770, Glu775, Gly800, Ile801, His802, Ser803, Gln843, and Glu855. Residues Gln843, Glu855, and Asn857 each coordinate Mg(2+). Residues Gln843, Glu855, and Asn857 each coordinate Mn(2+). Residues 966–1113 (GSLPAQGTVF…QELHRVIGGV (148 aa)) form the MGS-like domain. The allosteric domain stretch occupies residues 966 to 1115 (GSLPAQGTVF…LHRVIGGVER (150 aa)).

This sequence belongs to the CarB family. In terms of assembly, composed of two chains; the small (or glutamine) chain promotes the hydrolysis of glutamine to ammonia, which is used by the large (or ammonia) chain to synthesize carbamoyl phosphate. Tetramer of heterodimers (alpha,beta)4. Requires Mg(2+) as cofactor. Mn(2+) serves as cofactor.

The enzyme catalyses hydrogencarbonate + L-glutamine + 2 ATP + H2O = carbamoyl phosphate + L-glutamate + 2 ADP + phosphate + 2 H(+). It catalyses the reaction hydrogencarbonate + NH4(+) + 2 ATP = carbamoyl phosphate + 2 ADP + phosphate + 2 H(+). Its pathway is amino-acid biosynthesis; L-arginine biosynthesis; carbamoyl phosphate from bicarbonate: step 1/1. The protein operates within pyrimidine metabolism; UMP biosynthesis via de novo pathway; (S)-dihydroorotate from bicarbonate: step 1/3. Its function is as follows. Large subunit of the glutamine-dependent carbamoyl phosphate synthetase (CPSase). CPSase catalyzes the formation of carbamoyl phosphate from the ammonia moiety of glutamine, carbonate, and phosphate donated by ATP, constituting the first step of 2 biosynthetic pathways, one leading to arginine and/or urea and the other to pyrimidine nucleotides. The large subunit (synthetase) binds the substrates ammonia (free or transferred from glutamine from the small subunit), hydrogencarbonate and ATP and carries out an ATP-coupled ligase reaction, activating hydrogencarbonate by forming carboxy phosphate which reacts with ammonia to form carbamoyl phosphate. In Mycobacterium bovis (strain ATCC BAA-935 / AF2122/97), this protein is Carbamoyl phosphate synthase large chain.